The chain runs to 128 residues: Holo-[acyl-carrier-protein] synthase (128 aa).

Residues D8 and E60 each coordinate Mg(2+).

Belongs to the P-Pant transferase superfamily. AcpS family. It depends on Mg(2+) as a cofactor.

The protein resides in the cytoplasm. It carries out the reaction apo-[ACP] + CoA = holo-[ACP] + adenosine 3',5'-bisphosphate + H(+). In terms of biological role, transfers the 4'-phosphopantetheine moiety from coenzyme A to a Ser of acyl-carrier-protein. In Anaeromyxobacter dehalogenans (strain 2CP-C), this protein is Holo-[acyl-carrier-protein] synthase.